We begin with the raw amino-acid sequence, 121 residues long: MTTQEIIEVIKGLSVLELNDLVKACEEEFGVSAAAGVVVAAAGAGAAAAEEKTEFDVELTEAGDQKVKVIKVVREITGLGLKEAKDVVDGAPKVVKEQASKEEAEEIKKKLEEVGAKVTLK.

It belongs to the bacterial ribosomal protein bL12 family. In terms of assembly, homodimer. Part of the ribosomal stalk of the 50S ribosomal subunit. Forms a multimeric L10(L12)X complex, where L10 forms an elongated spine to which 2 to 4 L12 dimers bind in a sequential fashion. Binds GTP-bound translation factors.

Its function is as follows. Forms part of the ribosomal stalk which helps the ribosome interact with GTP-bound translation factors. Is thus essential for accurate translation. The sequence is that of Large ribosomal subunit protein bL12 from Lachnospira eligens (strain ATCC 27750 / DSM 3376 / VPI C15-48 / C15-B4) (Eubacterium eligens).